The sequence spans 451 residues: Tubulin alpha-1B chain (451 aa).

The MREC motif signature appears at 1 to 4 (MREC). GTP is bound by residues glycine 10, glutamine 11, alanine 12, and glutamine 15. At lysine 40 the chain carries N6,N6,N6-trimethyllysine; alternate. Lysine 40 is subject to N6-acetyllysine; alternate. Position 48 is a phosphoserine (serine 48). The GTP site is built by glutamate 71, alanine 99, serine 140, glycine 143, glycine 144, threonine 145, glycine 146, threonine 179, glutamate 183, asparagine 206, tyrosine 224, and asparagine 228. Glutamate 71 lines the Mg(2+) pocket. At serine 232 the chain carries Phosphoserine. Residue leucine 252 coordinates GTP. Residue glutamate 254 is part of the active site. Tyrosine 282 carries the 3'-nitrotyrosine modification. Lysine 326 participates in a covalent cross-link: Glycyl lysine isopeptide (Lys-Gly) (interchain with G-Cter in ubiquitin). At arginine 339 the chain carries Omega-N-methylarginine. Lysine 370 is covalently cross-linked (Glycyl lysine isopeptide (Lys-Gly) (interchain with G-Cter in ubiquitin)). Positions 432–451 (YEEVGVDSVEGEGEEEGEEY) are disordered. Position 439 is a phosphoserine (serine 439). Glutamate 443 and glutamate 445 each carry 5-glutamyl polyglutamate. A 3'-nitrotyrosine modification is found at tyrosine 451.

This sequence belongs to the tubulin family. Heterodimer of alpha- and beta-tubulin. A typical microtubule is a hollow water-filled tube with an outer diameter of 25 nm and an inner diameter of 15 nM. Alpha-beta heterodimers associate head-to-tail to form protofilaments running lengthwise along the microtubule wall with the beta-tubulin subunit facing the microtubule plus end conferring a structural polarity. Microtubules usually have 13 protofilaments but different protofilament numbers can be found in some organisms and specialized cells. Interacts with gamma-tubulin; the interaction allows microtubules to nucleate from the gamma-tubulin ring complex (gTuRC). Nascent microtubule interacts (via alpha-tubulin MREC motif) with TTC5/STRAP; this interaction may result in tubulin mRNA-targeted degradation. Component of sperm flagellar doublet microtubules. The cofactor is Mg(2+). In terms of processing, some glutamate residues at the C-terminus are polyglutamylated, resulting in polyglutamate chains on the gamma-carboxyl group. Polyglutamylation plays a key role in microtubule severing by spastin (SPAST). SPAST preferentially recognizes and acts on microtubules decorated with short polyglutamate tails: severing activity by SPAST increases as the number of glutamates per tubulin rises from one to eight, but decreases beyond this glutamylation threshold. Glutamylation is also involved in cilia motility. Some glutamate residues at the C-terminus are monoglycylated but not polyglycylated due to the absence of functional TTLL10 in human. Monoglycylation is mainly limited to tubulin incorporated into cilia and flagella axonemes, which is required for their stability and maintenance. Flagella glycylation controls sperm motility. Both polyglutamylation and monoglycylation can coexist on the same protein on adjacent residues, and lowering glycylation levels increases polyglutamylation, and reciprocally. Post-translationally, acetylation of alpha chains at Lys-40 is located inside the microtubule lumen. This modification has been correlated with increased microtubule stability, intracellular transport and ciliary assembly. In terms of processing, methylation of alpha chains at Lys-40 is found in mitotic microtubules and is required for normal mitosis and cytokinesis contributing to genomic stability. Nitration of Tyr-451 is irreversible and interferes with normal dynein intracellular distribution. Post-translationally, undergoes a tyrosination/detyrosination cycle, the cyclic removal and re-addition of a C-terminal tyrosine residue by the enzymes tubulin tyrosine carboxypeptidase (MATCAP1/KIAA0895L, VASH1 or VASH2) and tubulin tyrosine ligase (TTL), respectively. In terms of processing, tyrosination promotes microtubule interaction with CAP-Gly domain-containing proteins such as CLIP1, CLIP2 and DCTN1. Tyrosination regulates the initiation of dynein-dynactin motility via interaction with DCTN1, which brings the dynein-dynactin complex into contact with microtubules. In neurons, tyrosinated tubulins mediate the initiation of retrograde vesicle transport. Detyrosination is involved in metaphase plate congression by guiding chromosomes during mitosis: detyrosination promotes interaction with CENPE, promoting pole-proximal transport of chromosomes toward the equator. Detyrosination increases microtubules-dependent mechanotransduction in dystrophic cardiac and skeletal muscle. In cardiomyocytes, detyrosinated microtubules are required to resist to contractile compression during contraction: detyrosination promotes association with desmin (DES) at force-generating sarcomeres, leading to buckled microtubules and mechanical resistance to contraction.

Its subcellular location is the cytoplasm. The protein localises to the cytoskeleton. The catalysed reaction is GTP + H2O = GDP + phosphate + H(+). In terms of biological role, tubulin is the major constituent of microtubules, protein filaments consisting of alpha- and beta-tubulin heterodimers. Microtubules grow by the addition of GTP-tubulin dimers to the microtubule end, where a stabilizing cap forms. Below the cap, tubulin dimers are in GDP-bound state, owing to GTPase activity of alpha-tubulin. The polypeptide is Tubulin alpha-1B chain (TUBA1B) (Homo sapiens (Human)).